The sequence spans 570 residues: Periplasmic trehalase (570 aa).

The signal sequence occupies residues methionine 1–alanine 34. Substrate-binding positions include arginine 159, tryptophan 166–aspartate 167, asparagine 203, histidine 212–glutamine 214, arginine 284–glutamate 286, and glycine 317. Active-site proton donor/acceptor residues include aspartate 319 and glutamate 503. A substrate-binding site is contributed by glutamate 518. The disordered stretch occupies residues lysine 544–glutamine 570. Residues proline 554–glutamine 570 are compositionally biased toward low complexity.

Belongs to the glycosyl hydrolase 37 family. As to quaternary structure, monomer.

The protein resides in the periplasm. The catalysed reaction is alpha,alpha-trehalose + H2O = alpha-D-glucose + beta-D-glucose. Functionally, provides the cells with the ability to utilize trehalose at high osmolarity by splitting it into glucose molecules that can subsequently be taken up by the phosphotransferase-mediated uptake system. The chain is Periplasmic trehalase from Salmonella paratyphi C (strain RKS4594).